We begin with the raw amino-acid sequence, 177 residues long: Putative 3-methyladenine DNA glycosylase (177 aa).

Belongs to the DNA glycosylase MPG family.

The polypeptide is Putative 3-methyladenine DNA glycosylase (Rickettsia felis (strain ATCC VR-1525 / URRWXCal2) (Rickettsia azadi)).